The primary structure comprises 183 residues: V-type ATP synthase subunit E (183 aa).

This sequence belongs to the V-ATPase E subunit family.

Produces ATP from ADP in the presence of a proton gradient across the membrane. The sequence is that of V-type ATP synthase subunit E from Fusobacterium nucleatum subsp. nucleatum (strain ATCC 25586 / DSM 15643 / BCRC 10681 / CIP 101130 / JCM 8532 / KCTC 2640 / LMG 13131 / VPI 4355).